The primary structure comprises 184 residues: RNA 2',3'-cyclic phosphodiesterase (184 aa).

His-40 serves as the catalytic Proton donor. Short sequence motifs (HXTX) lie at residues 40 to 43 and 125 to 128; these read HITL. The active-site Proton acceptor is the His-125.

Belongs to the 2H phosphoesterase superfamily. ThpR family.

It carries out the reaction a 3'-end 2',3'-cyclophospho-ribonucleotide-RNA + H2O = a 3'-end 2'-phospho-ribonucleotide-RNA + H(+). In terms of biological role, hydrolyzes RNA 2',3'-cyclic phosphodiester to an RNA 2'-phosphomonoester. In vitro, ligates 5' and 3' half-tRNA molecules with 2',3'-cyclic phosphate and 5'-hydroxyl termini, respectively, to the product containing the 2'-5' phosphodiester linkage. Ligase activity requires GTP, but GTP hydrolysis is not required for the reaction, which is reversible. Ligase activity is weak compared to the phosphodiesterase activity. The sequence is that of RNA 2',3'-cyclic phosphodiesterase from Pyrococcus furiosus (strain ATCC 43587 / DSM 3638 / JCM 8422 / Vc1).